The sequence spans 709 residues: Elongation factor G (709 aa).

Residues 10 to 295 (NQVRNIGIMA…AVVDYLPSPE (286 aa)) enclose the tr-type G domain. Residues 19-26 (AHIDAGKT), 91-95 (DTPGH), and 145-148 (NKMD) each bind GTP.

Belongs to the TRAFAC class translation factor GTPase superfamily. Classic translation factor GTPase family. EF-G/EF-2 subfamily.

Its subcellular location is the cytoplasm. Functionally, catalyzes the GTP-dependent ribosomal translocation step during translation elongation. During this step, the ribosome changes from the pre-translocational (PRE) to the post-translocational (POST) state as the newly formed A-site-bound peptidyl-tRNA and P-site-bound deacylated tRNA move to the P and E sites, respectively. Catalyzes the coordinated movement of the two tRNA molecules, the mRNA and conformational changes in the ribosome. This Bifidobacterium animalis subsp. lactis (strain AD011) protein is Elongation factor G.